A 331-amino-acid polypeptide reads, in one-letter code: Pantothenate kinase (331 aa).

109–116 (GSVAVGKS) lines the ATP pocket.

The protein belongs to the prokaryotic pantothenate kinase family.

It is found in the cytoplasm. The catalysed reaction is (R)-pantothenate + ATP = (R)-4'-phosphopantothenate + ADP + H(+). It functions in the pathway cofactor biosynthesis; coenzyme A biosynthesis; CoA from (R)-pantothenate: step 1/5. This chain is Pantothenate kinase, found in Sinorhizobium fredii (strain NBRC 101917 / NGR234).